The sequence spans 205 residues: MTVQERWVELADIKDELAARDWFPGTSGNLAIRVSDDPLTFLVTASGRDKRKRTNEDFVLVDATGQLIGEQSGKPSAETLLHVEIFNNTNATCSLHVHTVDNNVISELYAAQGHVTFTGQEIIKALGYWEETASVRIPIIENHADIPTLARAFAPHVTGDAGAVLIRNHGITVWGETPAAAKRYLEAYEFLFSYSLKLRALGVHS.

Zn(2+) contacts are provided by His96 and His98.

The protein belongs to the aldolase class II family. MtnB subfamily. The cofactor is Zn(2+).

The catalysed reaction is 5-(methylsulfanyl)-D-ribulose 1-phosphate = 5-methylsulfanyl-2,3-dioxopentyl phosphate + H2O. It functions in the pathway amino-acid biosynthesis; L-methionine biosynthesis via salvage pathway; L-methionine from S-methyl-5-thio-alpha-D-ribose 1-phosphate: step 2/6. In terms of biological role, catalyzes the dehydration of methylthioribulose-1-phosphate (MTRu-1-P) into 2,3-diketo-5-methylthiopentyl-1-phosphate (DK-MTP-1-P). The polypeptide is Methylthioribulose-1-phosphate dehydratase (Exiguobacterium sp. (strain ATCC BAA-1283 / AT1b)).